We begin with the raw amino-acid sequence, 773 residues long: MAEAHQAVAFQFTVTPDGIDLRLSHEALRQIYLSGLHSWKKKFIRFKNGIITGVYPASPSSWLIVVVGVMTTMYAKIDPSLGIIAKINRTLETANCMSSQTKNVVSGVLFGTGLWVALIVTMRYSLKVLLSYHGWMFTEHGKMSRATKIWMGMVKIFSGRKPMLYSFQTSLPRLPVPAVKDTVNRYLQSVRPLMKEEDFKRMTALAQDFAVGLGPRLQWYLKLKSWWATNYVSDWWEEYIYLRGRGPLMVNSNYYAMDLLYILPTHIQAARAGNAIHAILLYRRKLDREEIKPIRLLGSTIPLCSAQWERMFNTSRIPGEETDTIQHMRDSKHIVVYHRGRYFKVWLYHDGRLLKPREMEQQMQRILDNTSEPQPGEARLAALTAGDRVPWARCRQAYFGRGKNKQSLDAVEKAAFFVTLDETEEGYRSEDPDTSMDSYAKSLLHGRCYDRWFDKSFTFVVFKNGKMGLNAEHSWADAPIVAHLWEYVMSIDSLQLGYAEDGHCKGDINPNIPYPTRLQWDIPGECQEVIETSLNTANLLANDVDFHSFPFVAFGKGIIKKCRTSPDAFVQLALQLAHYKDMGKFCLTYEASMTRLFREGRTETVRSCTTESCDFVRAMVDPAQTVEQRLKLFKLASEKHQHMYRLAMTGSGIDRHLFCLYVVSKYLAVESPFLKEVLSEPWRLSTSQTPQQQVELFDLENNPEYVSSGGGFGPVADDGYGVSYILVGENLINFHISSKFSCPETDSHRFGRHLKEAMTDIITLFGLSSNSKK.

A2 carries the post-translational modification N-acetylalanine. Residues A2 to K47 lie on the Cytoplasmic side of the membrane. The helical transmembrane segment at N48–M73 threads the bilayer. Residues Y74–K102 lie on the Mitochondrial intermembrane side of the membrane. Residues N103–M122 form a helical membrane-spanning segment. Residues R123–K773 lie on the Cytoplasmic side of the membrane. Position 282 is a 3'-nitrotyrosine (Y282). Catalysis depends on H473, which acts as the Proton acceptor. CoA is bound at residue G555 to D567. Residue T588 is modified to Phosphothreonine. Y589 bears the 3'-nitrotyrosine mark. (R)-carnitine contacts are provided by Y589 and T602. A Phosphothreonine modification is found at T604. Phosphoserine is present on residues S741 and S747.

Belongs to the carnitine/choline acetyltransferase family. As to quaternary structure, homohexamer and homotrimer. Identified in a complex that contains at least CPT1A, ACSL1 and VDAC1. Also identified in complexes with ACSL1 and VDAC2 and VDAC3. Interacts with ZDHHC4. In terms of tissue distribution, strong expression in kidney and heart, and lower in liver and skeletal muscle.

It is found in the mitochondrion outer membrane. The enzyme catalyses (R)-carnitine + hexadecanoyl-CoA = O-hexadecanoyl-(R)-carnitine + CoA. It catalyses the reaction succinyl-CoA + L-lysyl-[protein] = N(6)-succinyl-L-lysyl-[protein] + CoA + H(+). It participates in lipid metabolism; fatty acid beta-oxidation. Its activity is regulated as follows. Inhibited by malonyl-CoA. In terms of biological role, catalyzes the transfer of the acyl group of long-chain fatty acid-CoA conjugates onto carnitine, an essential step for the mitochondrial uptake of long-chain fatty acids and their subsequent beta-oxidation in the mitochondrion. Also possesses a lysine succinyltransferase activity that can regulate enzymatic activity of substrate proteins such as ENO1 and metabolism independent of its classical carnitine O-palmitoyltransferase activity. Plays an important role in hepatic triglyceride metabolism. Also plays a role in inducible regulatory T-cell (iTreg) differentiation once activated by butyryl-CoA that antagonizes malonyl-CoA-mediated CPT1A repression. Sustains the IFN-I response by recruiting ZDHCC4 to palmitoylate MAVS at the mitochondria leading to MAVS stabilization and activation. Promotes ROS-induced oxidative stress in liver injury via modulation of NFE2L2 and NLRP3-mediated signaling pathways. This chain is Carnitine O-palmitoyltransferase 1, liver isoform, found in Homo sapiens (Human).